Reading from the N-terminus, the 365-residue chain is Glutamate 5-kinase 1 (365 aa).

Lysine 9 lines the ATP pocket. The substrate site is built by serine 49, aspartate 136, and asparagine 148. ATP contacts are provided by residues 168 to 169 (TD) and 210 to 216 (TGGMKSK). The region spanning 276–353 (SGEIIIDAGA…DELDFEKTFE (78 aa)) is the PUA domain.

It belongs to the glutamate 5-kinase family.

It is found in the cytoplasm. The catalysed reaction is L-glutamate + ATP = L-glutamyl 5-phosphate + ADP. Its pathway is amino-acid biosynthesis; L-proline biosynthesis; L-glutamate 5-semialdehyde from L-glutamate: step 1/2. Catalyzes the transfer of a phosphate group to glutamate to form L-glutamate 5-phosphate. The polypeptide is Glutamate 5-kinase 1 (Bacillus subtilis (strain 168)).